We begin with the raw amino-acid sequence, 203 residues long: FMN-dependent NADH:quinone oxidoreductase 3 (203 aa).

FMN-binding positions include serine 9, 15 to 17 (SAS), 95 to 98 (MYNF), and 139 to 142 (TAGG).

Belongs to the azoreductase type 1 family. In terms of assembly, homodimer. Requires FMN as cofactor.

It catalyses the reaction 2 a quinone + NADH + H(+) = 2 a 1,4-benzosemiquinone + NAD(+). The catalysed reaction is N,N-dimethyl-1,4-phenylenediamine + anthranilate + 2 NAD(+) = 2-(4-dimethylaminophenyl)diazenylbenzoate + 2 NADH + 2 H(+). Quinone reductase that provides resistance to thiol-specific stress caused by electrophilic quinones. In terms of biological role, also exhibits azoreductase activity. Catalyzes the reductive cleavage of the azo bond in aromatic azo compounds to the corresponding amines. The sequence is that of FMN-dependent NADH:quinone oxidoreductase 3 from Pseudomonas fluorescens (strain Pf0-1).